The following is a 300-amino-acid chain: Rhodopsin (300 aa).

Residues 1–18 are Extracellular-facing; it reads LHMIHLHWYQYPPMNPMM. The helical transmembrane segment at 19–43 threads the bilayer; sequence YPLLLVFMLITGILCLAGNFVTIWV. Over 44–55 the chain is Cytoplasmic; it reads FMNTKSLRTPAN. A helical transmembrane segment spans residues 56-78; that stretch reads LLVVNLAMSDFLMMFTMFPPMMV. Residues 79–92 are Extracellular-facing; the sequence is TCYYHTWTLGATFC. Cysteine 92 and cysteine 168 form a disulfide bridge. Residues 93-115 form a helical membrane-spanning segment; sequence QVYAFLGNLCGCASIWTMVFITF. A 'Ionic lock' involved in activated form stabilization motif is present at residues 116–118; sequence DRY. The Cytoplasmic portion of the chain corresponds to 116-134; it reads DRYNVIVKGVAGEPLSTKK. A helical membrane pass occupies residues 135 to 155; the sequence is ASLWILTIWILSITWCIAPFF. The Extracellular segment spans residues 156 to 181; it reads GWNRYVPEGNTGCGTDYLSEDILSRS. Residues 182–203 form a helical membrane-spanning segment; that stretch reads YLYIYSTWVYFLPLAITIYCHV. Topologically, residues 204–244 are cytoplasmic; sequence FIIKAVAAHEKGMRDQAKKMGIKSLRNEEAQKTSAECRLAK. A helical transmembrane segment spans residues 245–266; it reads IAMTTVALWFIAWTPYLLINWV. Topologically, residues 267-277 are extracellular; it reads GMFARSYLSPV. The helical transmembrane segment at 278–299 threads the bilayer; it reads YTIWGYVFAKANAVYNPIVYAI. The residue at position 287 (lysine 287) is an N6-(retinylidene)lysine.

Belongs to the G-protein coupled receptor 1 family. Opsin subfamily. In terms of assembly, homodimer. Interacts with GNAQ. Contains one covalently linked retinal chromophore.

Its subcellular location is the cell projection. The protein resides in the rhabdomere membrane. Its function is as follows. Photoreceptor required for image-forming vision at low light intensity. Can use both retinal and 3-dehydroretinal as visual pigment. Light-induced isomerization of 11-cis to all-trans retinal triggers a conformational change that activates signaling via G-proteins. Signaling via GNAQ probably mediates the activation of phospholipase C. The protein is Rhodopsin (RHO) of Cambarus maculatus (Freckled crayfish).